The sequence spans 315 residues: MSDSLRIIFAGTPDFAARHLDVLLSSGHEVVGVFTQPDRPAGRGNKLTPSPVKVLAEQHSIPVFQPKSLRPAENQAMVEALDADVMVVVAYGLILPQPVLSMPRLGCINVHGSLLPLWRGAAPIQRALWAGDSETGVTIMQMDVGLDTGAMLHKIACPILPQDTSATLYDKLAALGPRGLLETLERLADSSAVAEAQNDAFATYAEKLSKEEARLNWLLSAEQLERCIRAFNPWPVSYFIVDEQPVKVWKAEVIAKSHGSQPGTILQADKQGIQVAAADGILNIQELQPAGKKVMSAQDLLNSRREWFVPGNTLN.

(6S)-5,6,7,8-tetrahydrofolate is bound at residue 113-116 (SLLP).

It belongs to the Fmt family.

It catalyses the reaction L-methionyl-tRNA(fMet) + (6R)-10-formyltetrahydrofolate = N-formyl-L-methionyl-tRNA(fMet) + (6S)-5,6,7,8-tetrahydrofolate + H(+). Attaches a formyl group to the free amino group of methionyl-tRNA(fMet). The formyl group appears to play a dual role in the initiator identity of N-formylmethionyl-tRNA by promoting its recognition by IF2 and preventing the misappropriation of this tRNA by the elongation apparatus. In Pectobacterium atrosepticum (strain SCRI 1043 / ATCC BAA-672) (Erwinia carotovora subsp. atroseptica), this protein is Methionyl-tRNA formyltransferase.